The following is a 56-amino-acid chain: Large ribosomal subunit protein bL32B (56 aa).

Over residues 1–19 the composition is skewed to basic residues; that stretch reads MAVPKRRMSRSNTRHRRAQ. Positions 1-22 are disordered; it reads MAVPKRRMSRSNTRHRRAQWKA.

This sequence belongs to the bacterial ribosomal protein bL32 family.

This Streptomyces coelicolor (strain ATCC BAA-471 / A3(2) / M145) protein is Large ribosomal subunit protein bL32B (rpmF2).